Here is a 362-residue protein sequence, read N- to C-terminus: Tyrosine-protein kinase SRK2 (362 aa).

Positions 1-70 (TFLVRESESK…GLCVNLRQPC (70 aa)) constitute an SH2 domain. In terms of domain architecture, Protein kinase spans 95 to 348 (ITLIRKLGAG…ALQWRLEDFF (254 aa)). Residues 101 to 109 (LGAGQFGEV) and lysine 123 contribute to the ATP site. Aspartate 214 serves as the catalytic Proton acceptor.

This sequence belongs to the protein kinase superfamily. Tyr protein kinase family.

Its subcellular location is the cytoplasm. The enzyme catalyses L-tyrosyl-[protein] + ATP = O-phospho-L-tyrosyl-[protein] + ADP + H(+). This is Tyrosine-protein kinase SRK2 (SRK2) from Spongilla lacustris (Freshwater sponge).